The following is a 248-amino-acid chain: Malonyl-[acyl-carrier protein] O-methyltransferase 2 (248 aa).

This sequence belongs to the methyltransferase superfamily.

The catalysed reaction is malonyl-[ACP] + S-adenosyl-L-methionine = malonyl-[ACP] methyl ester + S-adenosyl-L-homocysteine. It functions in the pathway cofactor biosynthesis; biotin biosynthesis. In terms of biological role, converts the free carboxyl group of a malonyl-thioester to its methyl ester by transfer of a methyl group from S-adenosyl-L-methionine (SAM). It allows to synthesize pimeloyl-ACP via the fatty acid synthetic pathway. The polypeptide is Malonyl-[acyl-carrier protein] O-methyltransferase 2 (Coxiella burnetii (strain RSA 493 / Nine Mile phase I)).